Reading from the N-terminus, the 960-residue chain is CWF19-like protein 2 (960 aa).

Disordered regions lie at residues 1 to 222, 261 to 552, 624 to 648, and 712 to 731; these read MAAY…AGVV, EFQK…ELIL, AWPV…AIET, and AQKE…AVQE. Residues 13 to 101 adopt a coiled-coil conformation; sequence SIKSRKESKR…KKAKKEKKDE (89 aa). Residues 16-52 show a composition bias toward basic and acidic residues; sequence SRKESKREERERVIQKAKEKFEKEERRKAERKARGED. The span at 73–96 shows a compositional bias: basic residues; that stretch reads KTKKAKKEKKAKKSKKEKKKKAKK. The span at 108–117 shows a compositional bias: acidic residues; that stretch reads SSEDSEDEWV. Positions 135–146 are enriched in low complexity; that stretch reads EATPSSSSASNN. Residues 163–279 adopt a coiled-coil conformation; the sequence is SVADRRAQKE…EDAAYGERRD (117 aa). Composition is skewed to basic and acidic residues over residues 165–181, 261–372, and 404–417; these read ADRR…ERQK, EFQK…DDLS, and KPVD…EAGF. The span at 507–518 shows a compositional bias: polar residues; sequence SAVQDSETPTLQ. The stretch at 540 to 605 forms a coiled coil; the sequence is SESEEEEEEE…IKDQSKRASK (66 aa). The span at 541-552 shows a compositional bias: acidic residues; sequence ESEEEEEEELIL. Basic and acidic residues predominate over residues 713–731; that stretch reads QKERAGRDEERQRNKAVQE.

This sequence belongs to the CWF19 family.

This is CWF19-like protein 2 (cwf19l2) from Danio rerio (Zebrafish).